The sequence spans 382 residues: Beta-lactamase CMY-1 (382 aa).

Positions 1-23 are cleaved as a signal peptide; that stretch reads MQQRQSILWGAVATLMWAGLAHA. Serine 88 functions as the Acyl-ester intermediate in the catalytic mechanism. A beta-lactam is bound by residues serine 88, glutamine 144, tyrosine 174, asparagine 176, and asparagine 363.

Belongs to the class-C beta-lactamase family.

The enzyme catalyses a beta-lactam + H2O = a substituted beta-amino acid. Inhibited by the beta-lactamase-blocking agent sulbactam. Its function is as follows. Class C beta-lactamase which confers resistance to penicillins and cephalosporins. Has benzylpenicillin- and cefalotin-hydrolyzing activities. Has weak cefuroxime, cefotaxime, cefoxitin, imipenem and oxacillin-hydrolyzing activities. This chain is Beta-lactamase CMY-1, found in Klebsiella pneumoniae.